Consider the following 129-residue polypeptide: UPF0102 protein Clim_0016 (129 aa).

The protein belongs to the UPF0102 family.

The sequence is that of UPF0102 protein Clim_0016 from Chlorobium limicola (strain DSM 245 / NBRC 103803 / 6330).